Reading from the N-terminus, the 238-residue chain is Thymidine kinase a (238 aa).

ATP is bound by residues 38–45 (GPMFSGKS), 70–72 (DTR), and 115–118 (DEAQ). Glu116 functions as the Proton acceptor in the catalytic mechanism. Tyr147 lines the substrate pocket. Zn(2+) is bound by residues Cys172 and Cys175. Residues 191–195 (TELIG) and Tyr200 each bind substrate. Cys204 is a Zn(2+) binding site.

Belongs to the thymidine kinase family. In terms of assembly, monomer and dimer. Dimerization is stimulated by ATP. Expressed ubiquitously.

The protein resides in the cytoplasm. It catalyses the reaction thymidine + ATP = dTMP + ADP + H(+). It functions in the pathway purine metabolism. The protein operates within pyrimidine metabolism. Functionally, part of the salvage pathway for purine and pyrimidine deoxyribonucleotide synthesis. Phosphorylates preferentially purines over pyrimidines. Mediates tolerance to genotoxins, such as ultraviolet-C (UV-C) irradiation, MMC, a DNA crosslinker, and ZEO, a DNA intercalator, that induce double-strand breaks and thus contributes to several DNA repair pathways by providing deoxythymidine triphosphate that serve as precursors for DNA repair and to balance deoxyribonucleotides pools. The polypeptide is Thymidine kinase a (Arabidopsis thaliana (Mouse-ear cress)).